A 537-amino-acid polypeptide reads, in one-letter code: Glucose-6-phosphate isomerase (537 aa).

The Proton donor role is filled by glutamate 341. Residues histidine 372 and lysine 501 contribute to the active site.

The protein belongs to the GPI family.

It is found in the cytoplasm. It carries out the reaction alpha-D-glucose 6-phosphate = beta-D-fructose 6-phosphate. Its pathway is carbohydrate biosynthesis; gluconeogenesis. The protein operates within carbohydrate degradation; glycolysis; D-glyceraldehyde 3-phosphate and glycerone phosphate from D-glucose: step 2/4. Catalyzes the reversible isomerization of glucose-6-phosphate to fructose-6-phosphate. This is Glucose-6-phosphate isomerase from Jannaschia sp. (strain CCS1).